The sequence spans 284 residues: D-tagatose-1,6-bisphosphate aldolase subunit GatY (284 aa).

Aspartate 82 (proton donor) is an active-site residue. Zn(2+)-binding residues include histidine 83 and histidine 180. Glycine 181 serves as a coordination point for dihydroxyacetone phosphate. A Zn(2+)-binding site is contributed by histidine 208. Dihydroxyacetone phosphate-binding positions include 209-211 and 230-233; these read GAS and NVAT.

It belongs to the class II fructose-bisphosphate aldolase family. TagBP aldolase GatY subfamily. In terms of assembly, forms a complex with GatZ. It depends on Zn(2+) as a cofactor.

The enzyme catalyses D-tagatofuranose 1,6-bisphosphate = D-glyceraldehyde 3-phosphate + dihydroxyacetone phosphate. It participates in carbohydrate metabolism; D-tagatose 6-phosphate degradation; D-glyceraldehyde 3-phosphate and glycerone phosphate from D-tagatose 6-phosphate: step 2/2. Its function is as follows. Catalytic subunit of the tagatose-1,6-bisphosphate aldolase GatYZ, which catalyzes the reversible aldol condensation of dihydroxyacetone phosphate (DHAP or glycerone-phosphate) with glyceraldehyde 3-phosphate (G3P) to produce tagatose 1,6-bisphosphate (TBP). Requires GatZ subunit for full activity and stability. Is involved in the catabolism of galactitol. This Escherichia coli O139:H28 (strain E24377A / ETEC) protein is D-tagatose-1,6-bisphosphate aldolase subunit GatY.